Reading from the N-terminus, the 191-residue chain is Adenine phosphoribosyltransferase (191 aa).

It belongs to the purine/pyrimidine phosphoribosyltransferase family. In terms of assembly, homodimer.

It localises to the cytoplasm. The catalysed reaction is AMP + diphosphate = 5-phospho-alpha-D-ribose 1-diphosphate + adenine. Its pathway is purine metabolism; AMP biosynthesis via salvage pathway; AMP from adenine: step 1/1. Functionally, catalyzes a salvage reaction resulting in the formation of AMP, that is energically less costly than de novo synthesis. The sequence is that of Adenine phosphoribosyltransferase from Bordetella bronchiseptica (strain ATCC BAA-588 / NCTC 13252 / RB50) (Alcaligenes bronchisepticus).